Consider the following 177-residue polypeptide: Small ribosomal subunit protein uS4 (177 aa).

Residues 104-166 (RRLQTIVYKK…PTSPFKQHPP (63 aa)) enclose the S4 RNA-binding domain. A disordered region spans residues 158–177 (TSPFKQHPPTQQGEENVQQA). A compositionally biased stretch (polar residues) spans 165–177 (PPTQQGEENVQQA).

The protein belongs to the universal ribosomal protein uS4 family. In terms of assembly, part of the 30S ribosomal subunit. Contacts protein S5. The interaction surface between S4 and S5 is involved in control of translational fidelity.

In terms of biological role, one of the primary rRNA binding proteins, it binds directly to 16S rRNA where it nucleates assembly of the body of the 30S subunit. Its function is as follows. With S5 and S12 plays an important role in translational accuracy. The sequence is that of Small ribosomal subunit protein uS4 from Sulfurisphaera tokodaii (strain DSM 16993 / JCM 10545 / NBRC 100140 / 7) (Sulfolobus tokodaii).